The following is a 480-amino-acid chain: G-protein coupled receptor seb-2 (480 aa).

Topologically, residues 1–222 (MNPSISTAGA…CMSNGDVEAR (222 aa)) are extracellular. N-linked (GlcNAc...) asparagine glycosylation is present at asparagine 95. Residues 223–243 (ILAGLLTYSASVIFLIPAVFL) form a helical membrane-spanning segment. Residues 244-261 (LTLLRPIRCQPMFILHRH) are Cytoplasmic-facing. The chain crosses the membrane as a helical span at residues 262 to 282 (LLISCLLYGAFYLITVSLFVV). Topologically, residues 283–305 (NDAPLSSQVFQNHLFCRLLFSIQ) are extracellular. The chain crosses the membrane as a helical span at residues 306 to 328 (LRYLRLTNFTWMLAEAVYLWRLL). Residues 329 to 343 (HTAQHSEGETLRSYK) are Cytoplasmic-facing. The helical transmembrane segment at 344 to 364 (VICWGVPGVITVVYIFVRSLN) threads the bilayer. The Extracellular portion of the chain corresponds to 365 to 386 (DDVGMCWIENSTVAWIEWMIIT). Residues 387–407 (PSLLAMGVNLLLLGLIVYILV) form a helical membrane-spanning segment. Residues 408–423 (KKLRCDPHLERIQYRK) lie on the Cytoplasmic side of the membrane. The helical transmembrane segment at 424–444 (AVRGALMLIPVFGVQQLLTIY) threads the bilayer. The Extracellular segment spans residues 445–480 (RFRNVCLIYRLLHKSFCRRMCSEILVITSGEAGSRS).

The protein belongs to the G-protein coupled receptor 2 family. As to expression, present in the head body-wall muscles from the L1 larval stage through to adulthood. Also expressed between L4 and the adult molt in vulval vm1 muscle cells. These cells play a role in opening the vulva during egg laying.

It localises to the cell membrane. Functionally, not known. Putative receptor. This is G-protein coupled receptor seb-2 from Caenorhabditis elegans.